The sequence spans 307 residues: UDP-N-acetylenolpyruvoylglucosamine reductase (307 aa).

In terms of domain architecture, FAD-binding PCMH-type spans 33-197 (TGGNADFYIT…LEAAFTLAPG (165 aa)). Arginine 176 is a catalytic residue. Serine 226 (proton donor) is an active-site residue. Glutamate 296 is a catalytic residue.

Belongs to the MurB family. The cofactor is FAD.

It is found in the cytoplasm. It carries out the reaction UDP-N-acetyl-alpha-D-muramate + NADP(+) = UDP-N-acetyl-3-O-(1-carboxyvinyl)-alpha-D-glucosamine + NADPH + H(+). The protein operates within cell wall biogenesis; peptidoglycan biosynthesis. In terms of biological role, cell wall formation. This is UDP-N-acetylenolpyruvoylglucosamine reductase from Staphylococcus aureus (strain COL).